A 308-amino-acid chain; its full sequence is Ecto-ADP-ribosyltransferase 5 (308 aa).

The signal sequence occupies residues 1 to 23 (MILEDLLMVLSCLALHILWKVQA). A disulfide bond links C43 and C259. The TR mART core domain maps to 63 to 253 (ALLRESWEAA…IVTLWSYNQT (191 aa)). Residue Y100 participates in NAD(+) binding. Residue N102 is glycosylated (N-linked (GlcNAc...) asparagine). R161 and Q181 together coordinate NAD(+). The active site involves R161. S184 is an active-site residue. N197 carries N-linked (GlcNAc...) asparagine glycosylation. S215 contacts NAD(+). E222 is an active-site residue. N251 is a glycosylation site (N-linked (GlcNAc...) asparagine).

It belongs to the Arg-specific ADP-ribosyltransferase family.

Its subcellular location is the secreted. It localises to the membrane. The catalysed reaction is L-arginyl-[protein] + NAD(+) = N(omega)-(ADP-D-ribosyl)-L-arginyl-[protein] + nicotinamide + H(+). This Rattus norvegicus (Rat) protein is Ecto-ADP-ribosyltransferase 5 (Art5).